The following is a 123-amino-acid chain: Large ribosomal subunit protein bL12 (123 aa).

The protein belongs to the bacterial ribosomal protein bL12 family. As to quaternary structure, homodimer. Part of the ribosomal stalk of the 50S ribosomal subunit. Forms a multimeric L10(L12)X complex, where L10 forms an elongated spine to which 2 to 4 L12 dimers bind in a sequential fashion. Binds GTP-bound translation factors.

In terms of biological role, forms part of the ribosomal stalk which helps the ribosome interact with GTP-bound translation factors. Is thus essential for accurate translation. The sequence is that of Large ribosomal subunit protein bL12 from Borrelia turicatae (strain 91E135).